Here is a 499-residue protein sequence, read N- to C-terminus: Serine carboxypeptidase 1 (499 aa).

Positions 1 to 30 are cleaved as a signal peptide; sequence MARCRRRSGCTAGAALLLLLALALSGGGGA. 3 disulfides stabilise this stretch: Cys92-Cys388, Cys256-Cys268, and Cys291-Cys355. N-linked (GlcNAc...) asparagine glycosylation is present at Asn148. Residue Ser188 is part of the active site. An N-linked (GlcNAc...) asparagine glycan is attached at Asn262. Residues 297 to 351 constitute a propeptide, linker peptide; that stretch reads IKEVNLQNSKLPQSFKDLGTTNKPFPVRTRMLGRAWPLRAPVKAGRVPSWQEVAS. Asn407 is a glycosylation site (N-linked (GlcNAc...) asparagine). Catalysis depends on residues Asp423 and His476. Residues 497 to 499 carry the Microbody targeting signal motif; that stretch reads SKL.

The protein belongs to the peptidase S10 family. As to quaternary structure, carboxypeptidase I is a dimer, where each monomer is composed of two chains linked by disulfide bonds. The linker peptide is endoproteolytically excised during enzyme maturation.

Its subcellular location is the secreted. The catalysed reaction is Release of a C-terminal amino acid with broad specificity.. Its function is as follows. May be involved in the degradation of small peptides (2-5 residues) or in the degradation of storage proteins in the embryo. The protein is Serine carboxypeptidase 1 (CBP1) of Hordeum vulgare (Barley).